The chain runs to 303 residues: MMSSENRSHFSASCSSITEEARAKINLALHVTGQRPDGYHLLDMLVTFADHGDRLDFVPSPTDAFTLSGRFGGTLAGGSGTNLVLKARDLLRAAIGPLAFPVRIHLEKNLPIASGIGGGSADAAATLRGLTRLWGATLPEEALAALALKLGADVPMCLESRPLIARGIGEELEPVPELPAFAMVLANPLKGVSTPEVFRRLAEKNNPALSLALSRPQTADWLAAIAAARNDLEPPARELVPEIAAISAMLQAHGALLTRMSGSGATCFGIFATMAAAKDAAAALHEARLDWYFQATETVSGGV.

Residue Lys24 is part of the active site. ATP is bound at residue 111-121 (PIASGIGGGSA). Asp153 is an active-site residue.

The protein belongs to the GHMP kinase family. IspE subfamily.

It carries out the reaction 4-CDP-2-C-methyl-D-erythritol + ATP = 4-CDP-2-C-methyl-D-erythritol 2-phosphate + ADP + H(+). Its pathway is isoprenoid biosynthesis; isopentenyl diphosphate biosynthesis via DXP pathway; isopentenyl diphosphate from 1-deoxy-D-xylulose 5-phosphate: step 3/6. In terms of biological role, catalyzes the phosphorylation of the position 2 hydroxy group of 4-diphosphocytidyl-2C-methyl-D-erythritol. The polypeptide is 4-diphosphocytidyl-2-C-methyl-D-erythritol kinase (Rhizobium johnstonii (strain DSM 114642 / LMG 32736 / 3841) (Rhizobium leguminosarum bv. viciae)).